A 524-amino-acid polypeptide reads, in one-letter code: MLGMSLREAAAALRLGQIKPTELCQKCLSFIKETSFLNAYITVTEDFALKQAAEADERFIQGKPLGDLDGIPIAIKDNFSTAGIETTCASRMLKGYIAPYNATVVQKLFDQGAVFMGKTNLDEFAMGSGSTDSIFGPVKNPWSYSRSYIDKTSLSHHAAKDDSDWVITGGSSGGSACAVSAGTCYLAIGSDTGGSTRNPASHCGVVGLKPTYGLVSRHGLIPLVNSMDVPGIVTRCVDDAATVLGVLAGHDPYDSTTIQDPFQPFSLPEKVDVRNVCIGIPKEYHAPGLSAEILSLWSETADLLENAGAKVVEVSLPHTPYSIVCYHVLCTAEVASNMARFDGLEYGHRSDIDDSTEALYAATRREGFNEVVRGRILSGNYFLLKRNYEKYFVKAQKVRRLIADDFVKVFNSGVHVLLTPTTLGDAAPYLEFIQEDNRTRSAQEDVFTQCANMAGLPAVTVPAALSSRGLPLGLQFIGRAFCEQQLLTIAKWFEKQIDFSPLQFNRDSENGNIVQQYSKSASSV.

Active-site charge relay system residues include Lys76 and Ser171. Catalysis depends on Ser195, which acts as the Acyl-ester intermediate.

Belongs to the amidase family. GatA subfamily. In terms of assembly, subunit of the heterotrimeric GatCAB amidotransferase (AdT) complex, composed of A (qrsl1), B (gatb) and C (gatc) subunits.

It is found in the mitochondrion. The catalysed reaction is L-glutamyl-tRNA(Gln) + L-glutamine + ATP + H2O = L-glutaminyl-tRNA(Gln) + L-glutamate + ADP + phosphate + H(+). Functionally, allows the formation of correctly charged Gln-tRNA(Gln) through the transamidation of misacylated Glu-tRNA(Gln) in the mitochondria. The reaction takes place in the presence of glutamine and ATP through an activated gamma-phospho-Glu-tRNA(Gln). This is Glutamyl-tRNA(Gln) amidotransferase subunit A, mitochondrial (qrsl1) from Xenopus tropicalis (Western clawed frog).